The primary structure comprises 367 residues: Glutamate 5-kinase (367 aa).

K9 serves as a coordination point for ATP. Substrate-binding residues include S49, D136, and N148. ATP contacts are provided by residues 168 to 169 and 210 to 216; these read TD and TGGMKSK. The PUA domain occupies 276–350; it reads SGQIEVDAGA…GMQSQDIQVR (75 aa).

This sequence belongs to the glutamate 5-kinase family.

Its subcellular location is the cytoplasm. The catalysed reaction is L-glutamate + ATP = L-glutamyl 5-phosphate + ADP. It participates in amino-acid biosynthesis; L-proline biosynthesis; L-glutamate 5-semialdehyde from L-glutamate: step 1/2. Functionally, catalyzes the transfer of a phosphate group to glutamate to form L-glutamate 5-phosphate. This is Glutamate 5-kinase from Bacillus cereus (strain ATCC 14579 / DSM 31 / CCUG 7414 / JCM 2152 / NBRC 15305 / NCIMB 9373 / NCTC 2599 / NRRL B-3711).